A 687-amino-acid polypeptide reads, in one-letter code: T-box transcription factor TBX2b (687 aa).

The T-box DNA-binding region spans 103 to 276 (LWDQFHKLGT…NNPFAKGFRD (174 aa)). Disordered stretches follow at residues 303–452 (DRDG…ESPS) and 611–687 (NLLT…DSPK). Basic and acidic residues-rich tracts occupy residues 338–357 (GSRD…HQND), 375–400 (SRSE…RKTS), and 408–430 (NLEK…KDTE). Polar residues-rich tracts occupy residues 431–451 (NSGI…TESP), 611–630 (NLLT…SSKC), and 644–654 (GASQRNGSPKT). The stretch at 654–681 (TTMKESINELQNIQRLVSGLESQRETSS) forms a coiled coil. The segment covering 675 to 687 (SQRETSSPRDSPK) has biased composition (basic and acidic residues).

As to quaternary structure, binds DNA as a monomer. As to expression, expressed in the axial mesoderm, notably, in the notochordal precursor cells immediately before formation of the notochord and in the chordoneural hinge of the tail bud, after the notochord is formed. In addition, its expression is detected in the ventral forebrain, sensory neurons, fin buds and excretory system.

Its subcellular location is the nucleus. Transcription factor which acts as a transcriptional repressor. May also function as a transcriptional activator. Binds to the palindromic T site 5'-TTCACACCTAGGTGTGAA-3' DNA sequence, or a half-site, which are present in the regulatory region of several genes. Involved in the transcriptional regulation of genes required for mesoderm differentiation. Plays a role in the specification of late notochordal precursor cells and formation of the differentiated notochord. Required for cardiac atrioventricular canal formation. The protein is T-box transcription factor TBX2b (tbx2b) of Danio rerio (Zebrafish).